The primary structure comprises 414 residues: O-methyltransferase sirM (414 aa).

Aspartate 270 lines the S-adenosyl-L-methionine pocket. Catalysis depends on histidine 321, which acts as the Proton acceptor.

It belongs to the class I-like SAM-binding methyltransferase superfamily. Cation-independent O-methyltransferase family. COMT subfamily.

Its pathway is mycotoxin biosynthesis. Its function is as follows. O-methyltransferase; part of the gene cluster that mediates the biosynthesis of sirodesmin PL, an epipolythiodioxopiperazine (ETP) characterized by a disulfide bridged cyclic dipeptide and that acts as a phytotoxin which is involved in the blackleg didease of canola. SirD catalyzes the O-prenylation of L-tyrosine (L-Tyr) in the presence of dimethylallyl diphosphate (DMAPP) to yield 4-O-dimethylallyl-L-Tyr, and therefore represents probably the first pathway-specific enzyme in the biosynthesis of sirodesmin PL. 4-O-dimethylallyl-L-Tyr, then undergoes condensation with L-Ser in a reaction catalyzed by the non-ribosomal peptide synthase sirP to form the diketopiperazine (DKP) backbone. Further bishydroxylation of the DKP performed by the cytochrome P450 monooxygenase sirC leads to the production of the intermediate phomamide. This step is essential to form the reactive thiol group required for toxicity of sirodesmin PL. The next steps of sirodesmin biosynthesis are not well understood yet, but some predictions could be made from intermediate compounds identification. Phomamide is converted into phomalizarine via oxidation, probably by sirT. Further oxidation, methylation (by sirM or sirN) and reduction steps convert phomalizarine to deacetyl sirodesmin. Finally, acetyltransferase sirH probably acetylates deacetyl sirodesmin to produce sirodesmin PL. This Leptosphaeria maculans (Blackleg fungus) protein is O-methyltransferase sirM.